The chain runs to 208 residues: MGISRDNWHKRRRTGGKRKPVHKKRKYELGRPAANTKIGPRRIHTIRVRGGNKKYRALRLDVGNFSWGSECCTRKTRIIDVVYNASNNELVRTKTLVKNCVVLVDSTPYRQWYESHYALPLGRKKGAKLTPEEEEILNKKRSKKVQKKFTLRRKTAKISPLLEEQFLQGKLLACISSRPGQCGRADGYVLEGKELEFYLRKIKAKKGK.

The segment at 1 to 27 is disordered; sequence MGISRDNWHKRRRTGGKRKPVHKKRKY. The span at 8 to 26 shows a compositional bias: basic residues; that stretch reads WHKRRRTGGKRKPVHKKRK.

The protein belongs to the eukaryotic ribosomal protein eS8 family. As to quaternary structure, component of the small ribosomal subunit. Identified in a IGF2BP1-dependent mRNP granule complex containing untranslated mRNAs. Part of the small subunit (SSU) processome, composed of more than 70 proteins and the RNA chaperone small nucleolar RNA (snoRNA) U3.

It localises to the cytoplasm. The protein localises to the membrane. The protein resides in the nucleus. It is found in the nucleolus. Functionally, component of the small ribosomal subunit. The ribosome is a large ribonucleoprotein complex responsible for the synthesis of proteins in the cell. Part of the small subunit (SSU) processome, first precursor of the small eukaryotic ribosomal subunit. During the assembly of the SSU processome in the nucleolus, many ribosome biogenesis factors, an RNA chaperone and ribosomal proteins associate with the nascent pre-rRNA and work in concert to generate RNA folding, modifications, rearrangements and cleavage as well as targeted degradation of pre-ribosomal RNA by the RNA exosome. In Danio rerio (Zebrafish), this protein is Small ribosomal subunit protein eS8 (rps8).